Here is a 467-residue protein sequence, read N- to C-terminus: Phytase A (467 aa).

Residues 1–23 (MGVSAVLLPLYLLAGVTSGLAVP) form the signal peptide. Asn-27 carries an N-linked (GlcNAc...) asparagine glycan. Cys-31 and Cys-40 form a disulfide bridge. 1D-myo-inositol hexakisphosphate-binding residues include Gln-50 and Tyr-51. Asn-59 carries an N-linked (GlcNAc...) asparagine glycan. Intrachain disulfides connect Cys-71-Cys-414, Cys-215-Cys-465, Cys-264-Cys-282, and Cys-436-Cys-444. 1D-myo-inositol hexakisphosphate contacts are provided by Arg-81, His-82, Arg-85, and Thr-88. The active-site Nucleophile is the His-82. N-linked (GlcNAc...) asparagine glycosylation is found at Asn-105 and Asn-120. Residue Arg-165 participates in 1D-myo-inositol hexakisphosphate binding. Residues Asn-207 and Asn-230 are each glycosylated (N-linked (GlcNAc...) asparagine). Lys-301 contributes to the 1D-myo-inositol hexakisphosphate binding site. N-linked (GlcNAc...) asparagine glycans are attached at residues Asn-339 and Asn-352. Residues His-361 and Asp-362 each contribute to the 1D-myo-inositol hexakisphosphate site. N-linked (GlcNAc...) asparagine glycans are attached at residues Asn-376 and Asn-388.

The protein belongs to the histidine acid phosphatase family. Monomer.

It localises to the secreted. The enzyme catalyses 1D-myo-inositol hexakisphosphate + H2O = 1D-myo-inositol 1,2,4,5,6-pentakisphosphate + phosphate. It carries out the reaction 1D-myo-inositol 1,2,4,5,6-pentakisphosphate + H2O = 1D-myo-inositol 1,2,5,6-tetrakisphosphate + phosphate. The catalysed reaction is 1D-myo-inositol 1,2,5,6-tetrakisphosphate + H2O = 1D-myo-inositol 1,2,6-trisphosphate + phosphate. It catalyses the reaction 1D-myo-inositol 1,2,6-trisphosphate + H2O = 1D-myo-inositol 1,2-bisphosphate + phosphate. The enzyme catalyses 1D-myo-inositol 1,2-bisphosphate + H2O = 1D-myo-inositol 2-phosphate + phosphate. Functionally, catalyzes the phosphate monoester hydrolysis of phytic acid (myo-inositol hexakisphosphate), which results in the stepwise formation of myo-inositol pentakis-, tetrakis-, tris-, bis-, and monophosphates, as well as the liberation of inorganic phosphate. Myo-inositol 2-monophosphate is the end product. The polypeptide is Phytase A (phyA) (Aspergillus awamori (Black koji mold)).